A 516-amino-acid polypeptide reads, in one-letter code: L-amino acid oxidase (516 aa).

Positions M1 to C18 are cleaved as a signal peptide. Residues M61–S62, E81–A82, R89, and G105–R108 contribute to the FAD site. Substrate is bound at residue R108. N190 carries N-linked (GlcNAc...) asparagine glycosylation. V279 contacts FAD. Residues N299 and N404 are each glycosylated (N-linked (GlcNAc...) asparagine). C349 and C430 are oxidised to a cystine. FAD-binding positions include E475 and G482–T487. G482–W483 provides a ligand contact to substrate.

The protein belongs to the flavin monoamine oxidase family. FIG1 subfamily. Homodimer; non-covalently linked. Requires FAD as cofactor. N-glycosylated (14%). The enzymatic activity remains unchanged after deglycosylation. In terms of tissue distribution, expressed by the venom gland.

It localises to the secreted. It catalyses the reaction an L-alpha-amino acid + O2 + H2O = a 2-oxocarboxylate + H2O2 + NH4(+). It carries out the reaction L-leucine + O2 + H2O = 4-methyl-2-oxopentanoate + H2O2 + NH4(+). The enzyme catalyses L-phenylalanine + O2 + H2O = 3-phenylpyruvate + H2O2 + NH4(+). The catalysed reaction is L-tryptophan + O2 + H2O = indole-3-pyruvate + H2O2 + NH4(+). It catalyses the reaction L-methionine + O2 + H2O = 4-methylsulfanyl-2-oxobutanoate + H2O2 + NH4(+). It carries out the reaction L-isoleucine + O2 + H2O = (S)-3-methyl-2-oxopentanoate + H2O2 + NH4(+). Inhibited by the substrate analog N-acetyl tryptophan. In terms of biological role, catalyzes an oxidative deamination of predominantly hydrophobic and aromatic L-amino acids, thus producing hydrogen peroxide that may contribute to the diverse toxic effects of this enzyme. Is highly active on L-Met&gt;L-Leu&gt;L-Phe&gt;L-Trp=L-Ile. Binds to the cell surface and enables the production of highly localized concentration of hydrogen peroxide in or near the binding interfaces. Does not bind to phospholipids. Induces platelet-rich plasma aggregation, shows cytotoxic effects on some cancer cell lines (B16-F10 (mouse melanoma), PC12 (rat pheochromocytoma), MCF-7 and MDA-MB-231 (human breast carcinoma)) and shows antibacterial activities against both Gram-positive and Gram-negative bacteria. Also exhibits hemorrhage and edema. Does not show cytotoxicity on erythrocytes and peripheral blood mononuclear cells. Its effect on platelets is controversial, since it either induces aggregation or inhibits agonist-induced aggregation. These different effects are probably due to different experimental conditions. This Cerastes cerastes (Horned desert viper) protein is L-amino acid oxidase.